A 787-amino-acid chain; its full sequence is Disintegrin and metalloproteinase domain-containing protein 32 (787 aa).

The N-terminal stretch at 1–16 is a signal peptide; sequence MFRLWLLLAGLCGLLA. Serine 17 carries the phosphoserine modification. A propeptide spanning residues 17 to 174 is cleaved from the precursor; that stretch reads SRPGFQNSLL…PMDDNIFISE (158 aa). N-linked (GlcNAc...) asparagine glycosylation is found at asparagine 39 and asparagine 125. The Extracellular segment spans residues 175 to 682; that stretch reads KSEPAVPDLF…ERASGKTENT (508 aa). Residues 186–383 form the Peptidase M12B domain; it reads LYLEMHIVVD…VGVKCLQNKP (198 aa). Disulfide bonds link cysteine 295/cysteine 378, cysteine 337/cysteine 362, cysteine 339/cysteine 344, and cysteine 450/cysteine 471. The region spanning 391 to 479 is the Disintegrin domain; it reads KPVCGNGRLE…ECGPDITLIN (89 aa). N-linked (GlcNAc...) asparagine glycans are attached at residues asparagine 465 and asparagine 598. Residues 622–654 enclose the EGF-like domain; it reads SAHVCSQQCSGHGVCDSRNKCHCSPGYKPPNCQ. Intrachain disulfides connect cysteine 626–cysteine 636, cysteine 630–cysteine 642, and cysteine 644–cysteine 653. Residues 683-703 traverse the membrane as a helical segment; that stretch reads WLLGFLIALPILIVTTAIVLA. Topologically, residues 704 to 787 are cytoplasmic; sequence RKQLKKWFAK…DSTQTQSSSN (84 aa). Residues 715–787 form a disordered region; the sequence is EEFPSSESKS…DSTQTQSSSN (73 aa). Residues 728–749 are compositionally biased toward polar residues; it reads TQTYASQSSSEGSTQTYASQTR. The span at 771–787 shows a compositional bias: low complexity; the sequence is TSRSKSQDSTQTQSSSN.

In terms of tissue distribution, testis specific.

It localises to the membrane. Functionally, may play a role in sperm development and fertilization This is a non-catalytic metalloprotease-like protein. The protein is Disintegrin and metalloproteinase domain-containing protein 32 (ADAM32) of Homo sapiens (Human).